We begin with the raw amino-acid sequence, 417 residues long: Odorant receptor 65a (417 aa).

Over 1–62 (MTELRSERKN…MNSEQRRLPR (62 aa)) the chain is Cytoplasmic. The chain crosses the membrane as a helical span at residues 63–83 (IVAWQYFVSIQLATALASLFY). The Extracellular segment spans residues 84–98 (GISESIGDIVNLGRD). Residues 99 to 119 (LVFIITIIFICFRLVFFAQYA) form a helical membrane-spanning segment. At 120 to 152 (GELDVIIDALEDIYHWSIKGPATKEVQETKRLH) the chain is on the cytoplasmic side. Residues 153-173 (FLLFMALIITWFSFLILFMLI) traverse the membrane as a helical segment. At 174 to 206 (KISTPFWIESQTLPFHVSWPFQLHDPSKHPIAY) the chain is on the extracellular side. Residues 207-227 (IIIFVSQSTTMLYFLIWLGVV) form a helical membrane-spanning segment. The Cytoplasmic portion of the chain corresponds to 228-290 (ENMGVSLFFE…TDRCNHIFNG (63 aa)). Residues 291 to 311 (AFIMQMLINFLLVSLSLFEVL) traverse the membrane as a helical segment. The Extracellular segment spans residues 312–316 (AAKKN). The helical transmembrane segment at 317 to 337 (PQVAVEYMIIMLMTLGHLSFW) threads the bilayer. The Cytoplasmic portion of the chain corresponds to 338-393 (SKFGDMFSKESEQVALAVYEAYDPNVGSKSIHRQFCFFIQRAQKPLIMKASPFPPF). The helical transmembrane segment at 394–414 (NLENYMFILKQCYSILTILAN) threads the bilayer. Topologically, residues 415 to 417 (TLE) are extracellular.

The protein belongs to the insect chemoreceptor superfamily. Heteromeric odorant receptor channel (TC 1.A.69) family. Or49a subfamily. As to quaternary structure, interacts with Orco. Complexes exist early in the endomembrane system in olfactory sensory neurons (OSNs), coupling these complexes to the conserved ciliary trafficking pathway. As to expression, expressed in olfactory sensory neurons in the antenna.

Its subcellular location is the cell membrane. Its function is as follows. Odorant receptor which mediates acceptance or avoidance behavior, depending on its substrates. The odorant receptor repertoire encodes a large collection of odor stimuli that vary widely in identity, intensity, and duration. May form a complex with Orco to form odorant-sensing units, providing sensitive and prolonged odorant signaling and calcium permeability. Involved in olfactory communication for modulating aggression through the sensing of the male-specific pheromone 11-cis-vaccenyl acetate (cVA). Although acute exposure to cVA elicites aggression through Or67d olfactory receptor neurons (ORNs), chronic cVA exposure reduces aggression through Or65a ORNs. Moreover, cVA leads to generalized learning with mated females. It is a major component of the male cuticular hydrocarbon profile, but it is not found on virgin females. During copulation, cVA is transferred to the female in ejaculate along with sperm and peptides that decrease her sexual receptivity. The chain is Odorant receptor 65a (Or65a) from Drosophila melanogaster (Fruit fly).